A 948-amino-acid chain; its full sequence is Sensor histidine kinase RcsC (948 aa).

Over 1 to 20 (MKYLASFRTTLKVSRYLFRA) the chain is Cytoplasmic. Residues 21–41 (LALLIWLLIAFVSVFYIVNAL) traverse the membrane as a helical segment. Residues 42-313 (HQRESEIRQE…PVDLVLERIR (272 aa)) lie on the Periplasmic side of the membrane. A helical transmembrane segment spans residues 314–334 (ILILNAILLNVLVGAGLFTLA). The Cytoplasmic portion of the chain corresponds to 335–948 (RMYERRIFIP…YAERVRKTRA (614 aa)). The region spanning 357-425 (QFNRKIVASA…VLTSNNTNLQ (69 aa)) is the PAS domain. The Histidine kinase domain occupies 476-692 (TVSHELRTPL…QFTLRIPLYG (217 aa)). Phosphohistidine; by autocatalysis is present on H479. Residues 705-805 (AGTCCWLAVR…ARIYSIELDS (101 aa)) enclose the ABL domain. The Response regulatory domain occupies 826–940 (MILVVDDHPI…ALKQTLAVYA (115 aa)). D875 carries the post-translational modification 4-aspartylphosphate.

This sequence belongs to the RcsC family. As to quaternary structure, interacts with RcsD. In terms of processing, autophosphorylated. Activation probably requires a transfer of a phosphate group from a His in the transmitter domain to an Asp in the receiver domain.

It localises to the cell inner membrane. It catalyses the reaction ATP + protein L-histidine = ADP + protein N-phospho-L-histidine.. Component of the Rcs signaling system, which controls transcription of numerous genes. RcsC functions as a membrane-associated protein kinase that phosphorylates RcsD in response to environmental signals. The phosphoryl group is then transferred to the response regulator RcsB. The protein is Sensor histidine kinase RcsC of Salmonella typhi.